Consider the following 274-residue polypeptide: Thiamine kinase (274 aa).

This sequence belongs to the thiamine kinase family.

The catalysed reaction is thiamine + ATP = thiamine phosphate + ADP + H(+). The protein operates within cofactor biosynthesis; thiamine diphosphate biosynthesis; thiamine phosphate from thiamine: step 1/1. Functionally, catalyzes the ATP-dependent phosphorylation of thiamine to thiamine phosphate. Is involved in thiamine salvage. This chain is Thiamine kinase, found in Shigella dysenteriae serotype 1 (strain Sd197).